Consider the following 221-residue polypeptide: Type 3 secretion system stator protein (221 aa).

Belongs to the SctL stator family. In terms of assembly, the core secretion machinery of the T3SS is composed of approximately 20 different proteins, including cytoplasmic components, a base, an export apparatus and a needle. This subunit is part of the cytosolic complex. Interacts directly with YscN/SctN (T3SS ATPase) and YscQ/SctQ (the major sorting platform component).

The protein localises to the cytoplasm. Component of the type III secretion system (T3SS), also called injectisome, which is used to inject bacterial effector proteins into eukaryotic host cells. Acts as a regulator of the YscN/SctN ATPase activity. The protein is Type 3 secretion system stator protein of Yersinia pestis.